Reading from the N-terminus, the 348-residue chain is Lipoyl synthase (348 aa).

Residues cysteine 55, cysteine 60, cysteine 66, cysteine 81, cysteine 85, cysteine 88, and serine 292 each contribute to the [4Fe-4S] cluster site. The region spanning 67-281 is the Radical SAM core domain; the sequence is WESREATFLI…SDEAYEIGFA (215 aa).

Belongs to the radical SAM superfamily. Lipoyl synthase family. It depends on [4Fe-4S] cluster as a cofactor.

It localises to the cytoplasm. The catalysed reaction is [[Fe-S] cluster scaffold protein carrying a second [4Fe-4S](2+) cluster] + N(6)-octanoyl-L-lysyl-[protein] + 2 oxidized [2Fe-2S]-[ferredoxin] + 2 S-adenosyl-L-methionine + 4 H(+) = [[Fe-S] cluster scaffold protein] + N(6)-[(R)-dihydrolipoyl]-L-lysyl-[protein] + 4 Fe(3+) + 2 hydrogen sulfide + 2 5'-deoxyadenosine + 2 L-methionine + 2 reduced [2Fe-2S]-[ferredoxin]. The protein operates within protein modification; protein lipoylation via endogenous pathway; protein N(6)-(lipoyl)lysine from octanoyl-[acyl-carrier-protein]: step 2/2. Catalyzes the radical-mediated insertion of two sulfur atoms into the C-6 and C-8 positions of the octanoyl moiety bound to the lipoyl domains of lipoate-dependent enzymes, thereby converting the octanoylated domains into lipoylated derivatives. This chain is Lipoyl synthase, found in Corynebacterium efficiens (strain DSM 44549 / YS-314 / AJ 12310 / JCM 11189 / NBRC 100395).